The sequence spans 203 residues: Inositol diphosphatase DSP3 (203 aa).

A Tyrosine-protein phosphatase domain is found at 20 to 169 (NFSMVEDGIY…FDIVSLRQCL (150 aa)). The tract at residues 76-88 (FGIEGKTDPPTPM) is WPD loop important for active site topology. The active-site Phosphocysteine intermediate is the Cys-112.

The protein belongs to the protein-tyrosine phosphatase family. Atypical dual-specificity phosphatase Siw14-like subfamily. As to quaternary structure, interacts with FLZ1. Highly expressed in roots, stems and flowers. Expressed at low levels in leaves and siliques.

Its subcellular location is the nucleus. The enzyme catalyses 5-diphospho-1D-myo-inositol 1,2,3,4,6-pentakisphosphate + H2O = 1D-myo-inositol hexakisphosphate + phosphate + H(+). It carries out the reaction 1,5-bis(diphospho)-1D-myo-inositol 2,3,4,6-tetrakisphosphate + H2O = 1-diphospho-1D-myo-inositol 2,3,4,5,6-pentakisphosphate + phosphate + 2 H(+). The catalysed reaction is 3,5-bis(diphospho)-1D-myo-inositol 1,2,4,6-tetrakisphosphate + H2O = 3-diphospho-1D-myo-inositol 1,2,4,5,6-pentakisphosphate + phosphate + 2 H(+). It catalyses the reaction 6-diphospho-1D-myo-inositol pentakisphosphate + H2O = 1D-myo-inositol hexakisphosphate + phosphate + H(+). In terms of biological role, cleaves the beta-phosphate at the 5-position of soluble inositol pyrophosphates. Has highest activity on 5-diphosphoinositol 1,2,3,4,6-pentakisphosphate (5-InsP(7)), 1,5-bis-diphosphoinositol 2,3,4,6-tetrakisphosphate (1,5-InsP(8)) and 3,5-InsP(8). Possesses phosphotyrosine phosphatase activity in vitro. Dephosphorylates the phosphoinositides PI(3,5)P2. Hydrolyzes para-nitrophenyl phosphate and O-methylfluorescein phosphate in vitro. The polypeptide is Inositol diphosphatase DSP3 (Arabidopsis thaliana (Mouse-ear cress)).